The chain runs to 481 residues: UDP-glycosyltransferase 85A2 (481 aa).

UDP-alpha-D-glucose-binding positions include Ser303, 360–362 (CPQ), 377–385 (HCGWNSTLE), and 399–402 (FAEQ).

The protein belongs to the UDP-glycosyltransferase family. In terms of tissue distribution, expressed in roots, shoots, leaves and flowers.

The sequence is that of UDP-glycosyltransferase 85A2 (UGT85A2) from Arabidopsis thaliana (Mouse-ear cress).